The following is a 129-amino-acid chain: Small ribosomal subunit protein uS9 (129 aa).

The protein belongs to the universal ribosomal protein uS9 family.

The chain is Small ribosomal subunit protein uS9 from Helicobacter pylori (strain P12).